A 546-amino-acid polypeptide reads, in one-letter code: Cytochrome P450 monooxygenase gloP (546 aa).

The chain crosses the membrane as a helical span at residues 17-37 (TLSGGILTFLFIVVIAHFVLT). N-linked (GlcNAc...) asparagine glycans are attached at residues Asn-189, Asn-413, and Asn-416. Cys-492 is a heme binding site.

Belongs to the cytochrome P450 family. Requires heme as cofactor.

The protein resides in the membrane. It participates in mycotoxin biosynthesis. Cytochrome P450 monooxygenase; part of the gene cluster that mediates the biosynthesis of pneumocandins, lipohexapeptides of the echinocandin family that prevent fungal cell wall formation by non-competitive inhibition of beta-1,3-glucan synthase. The 10,12-dimethylmyristoyl side chain is synthesized by the reducing polyketide synthase gloL/GLPKS4. The thioesterase gloN/GLHYD exclusively interacts with gloL/GLPKS4 to maintain turnover of the polyketide side chain. The 10R,12S-dimethylmyristic acid is then transferred to the first thiolation domain of the nonribosomal peptide synthetase gloA/GLNRPS4 by the acyl-AMP ligase gloD/GLligase, followed by its acylation to L-ornithine to trigger elongation of the cyclic hexapeptide. L-ornithine, 4R-hydroxyl-L-proline (generated from L-proline by the dioxygenase gloF/GLOXY2), 3S-hydroxyl-L-homotyrosine (generated by gloG/GLHtyB, gloH/GLHtyA, gloI/GLHtyC, gloJ/GLHtyD and hydroxylated at C-3 by the dioxygenase gloM/GLOXY1), 3R-hydroxyl-L-glutamine (generated from L-glutamine probably by the dioxygenase gloE/GLOXY3) and 3S-hydroxyl-L-proline (generated from L-proline by the dioxygenase gloF/GLOXY2 to yield pneumocandin B0), or 3S-hydroxyl-4S-methyl-L-proline (generated from L-leucine by the dioxygenase gloC/GLOXY4 to yield pneumocandin A0) are sequentially added to the growing chain. The last C domain of gloA/GLNRPS4 is proposed to be responsible for cyclization by condensation to form the peptide bond between L-ornithine and 3S-hydroxyl-4S-methyl-L-proline (for pneumocandin A0) or 3S-hydroxyl-L-proline (for pneumocandin B0). Finally, the subsequent C-4 hydroxylation of 3S-hydroxyl-L-homotyrosine and L-ornithine dihydroxylation at C-4 and C-5 are performed by the cytochrome P450 monooxygenases gloP/GLP450-1 and gloO/GLP450-2, respectively. The protein is Cytochrome P450 monooxygenase gloP of Glarea lozoyensis (strain ATCC 20868 / MF5171).